Here is a 2367-residue protein sequence, read N- to C-terminus: Toxin B (2367 aa).

The interval 2–91 (SLVNRKQLEK…EILELKNSNL (90 aa)) is four-helical bundle. The 374-residue stretch at 96–469 (KNLHFIWIGG…YPEANTTITL (374 aa)) folds into the GT44 domain. The segment at 96–469 (KNLHFIWIGG…YPEANTTITL (374 aa)) is glucosyltransferase region. Residues 101–103 (IWI), Asn-139, 269–273 (SDILR), and 286–288 (DVD) contribute to the UDP-alpha-D-glucose site. Mg(2+) is bound by residues Asp-286, Asp-288, and Glu-516. 519-521 (SLW) contacts UDP-alpha-D-glucose. An autoprocessing region region spans residues 545-800 (GEDDNLDFSQ…KSKNLPELST (256 aa)). Residues Glu-546 and Asp-547 each contribute to the Zn(2+) site. One can recognise a Peptidase C80 domain in the interval 568 to 775 (SSSTKSSERG…EESIIKDISS (208 aa)). Tyr-578, Lys-601, and Lys-648 together coordinate 1D-myo-inositol hexakisphosphate. His-654 provides a ligand contact to Zn(2+). Residue His-654 is the For protease activity of the active site. Residue Cys-699 is the Nucleophile; for protease activity of the active site. His-758 is a Zn(2+) binding site. 3 residues coordinate 1D-myo-inositol hexakisphosphate: Lys-765, Lys-776, and Lys-793. The interval 801 to 1501 (LLQEIRNNSN…VVLIIKVYMD (701 aa)) is translocation region. Interaction with host frizzled receptors FZD1, FZD2 and FZD7 regions lie at residues 1434–1439 (LKTLMA), 1487–1512 (SELSDVVLIIKVYMDNSKPPFGYYSN), and 1598–1600 (SLK). Cell wall-binding repeat units lie at residues 1833-1852 (VSGLVYINDSLYYFKPPIKN), 1854-1873 (ITGFTTIGDDKYYFNPDNGG), 1876-1895 (SVGETIIDGKNYYFSQNGVL), 1926-1945 (FTGKLIIDENVYYFGDNYRA), 1946-1965 (AIEWQTLDDEVYYFSTDTGR), 1967-1986 (FKGLNQIGDDKFYFNSDGIM), 1987-2006 (QKGFVNINDKTFYFDDSGVM), 2007-2026 (KSGYTEIDGRYFYFAENGEM), 2057-2076 (YSGILNFNNKIYYFDDSFTA), 2077-2097 (VVGWKDLEDGSKYYFDENTAE), 2099-2118 (SIGISIINDGKYYFNDSGIM), 2119-2138 (QIGFVTINNEVFYFSDSGIV), 2139-2158 (ESGMQNIDDNYFYISENGLV), 2209-2231 (ETGWIYDSENESDKYYFDPEAKK), 2233-2252 (YKGINVIDDIKYYFDENGIM), 2253-2272 (RTGLITFEDNHYYFNEDGEM), 2273-2292 (QYGYLNIEDKMFYFSEDGIM), 2323-2342 (YTGWLDLDEKRYYFTDEYIA), and 2343-2362 (ATGSVIIDGEEYYFDPDTAQ). The segment at 1835–2367 (GLVYINDSLY…PDTAQLVISE (533 aa)) is receptor-binding (CROPS) region.

This sequence belongs to the clostridial glucosylating toxin (LCGT) family. As to quaternary structure, interacts with host FZD1. Interacts with host FZD2; interaction promotes toxin entry into host cell and occupies the binding site for Wnt-adducted palmitoleate in FZD2, leading to prevent Wnt-binding and downstream Wnt signaling. Interacts with host FZD7. Interacts with host CSPG4. Interacts with host NECTIN3/PVRL3. It depends on Zn(2+) as a cofactor. Mn(2+) serves as cofactor. Mg(2+) is required as a cofactor. In terms of processing, undergoes autocatalytic cleavage to release the N-terminal part (Glucosyltransferase TcdB), which constitutes the active part of the toxin, in the host cytosol. 1D-myo-inositol hexakisphosphate-binding (InsP6) activates the peptidase C80 domain and promotes autoprocessing.

Its subcellular location is the secreted. The protein resides in the host endosome membrane. It is found in the host cytoplasm. It localises to the host cytosol. The protein localises to the host cell membrane. The enzyme catalyses L-threonyl-[protein] + UDP-alpha-D-glucose = 3-O-(alpha-D-glucosyl)-L-threonyl-[protein] + UDP + H(+). With respect to regulation, protease activity is activated upon binding to 1D-myo-inositol hexakisphosphate (InsP6), which induces conformational reorganization. Functionally, precursor of a cytotoxin that targets and disrupts the colonic epithelium, inducing the host inflammatory and innate immune responses and resulting in diarrhea and pseudomembranous colitis. TcdB constitutes the main toxin that mediates the pathology of C.difficile infection, an opportunistic pathogen that colonizes the colon when the normal gut microbiome is disrupted. Compared to TcdA, TcdB is more virulent and more important for inducing the host inflammatory and innate immune responses. This form constitutes the precursor of the toxin: it enters into host cells and mediates autoprocessing to release the active toxin (Glucosyltransferase TcdB) into the host cytosol. Targets colonic epithelia by binding to the frizzled receptors FZD1, FZD2 and FZD7, and enters host cells via clathrin-mediated endocytosis. Frizzled receptors constitute the major host receptors in the colonic epithelium, but other receptors, such as CSPG4 or NECTIN3/PVRL3, have been identified. Binding to carbohydrates and sulfated glycosaminoglycans on host cell surface also contribute to entry into cells. Once entered into host cells, acidification in the endosome promotes the membrane insertion of the translocation region and formation of a pore, leading to translocation of the GT44 and peptidase C80 domains across the endosomal membrane. This activates the peptidase C80 domain and autocatalytic processing, releasing the N-terminal part (Glucosyltransferase TcdB), which constitutes the active part of the toxin, in the cytosol. In terms of biological role, active form of the toxin, which is released into the host cytosol following autoprocessing and inactivates small GTPases. Acts by mediating monoglucosylation of small GTPases of the Rho family (Rac1, RhoA, RhoB, RhoC, RhoG and Cdc42) in host cells at the conserved threonine residue located in the switch I region ('Thr-37/35'), using UDP-alpha-D-glucose as the sugar donor. Monoglucosylation of host small GTPases completely prevents the recognition of the downstream effector, blocking the GTPases in their inactive form, leading to actin cytoskeleton disruption and cell death, resulting in the loss of colonic epithelial barrier function. The polypeptide is Toxin B (Clostridioides difficile (Peptoclostridium difficile)).